We begin with the raw amino-acid sequence, 485 residues long: Aspartyl/glutamyl-tRNA(Asn/Gln) amidotransferase subunit B (485 aa).

It belongs to the GatB/GatE family. GatB subfamily. In terms of assembly, heterotrimer of A, B and C subunits.

It carries out the reaction L-glutamyl-tRNA(Gln) + L-glutamine + ATP + H2O = L-glutaminyl-tRNA(Gln) + L-glutamate + ADP + phosphate + H(+). The catalysed reaction is L-aspartyl-tRNA(Asn) + L-glutamine + ATP + H2O = L-asparaginyl-tRNA(Asn) + L-glutamate + ADP + phosphate + 2 H(+). In terms of biological role, allows the formation of correctly charged Asn-tRNA(Asn) or Gln-tRNA(Gln) through the transamidation of misacylated Asp-tRNA(Asn) or Glu-tRNA(Gln) in organisms which lack either or both of asparaginyl-tRNA or glutaminyl-tRNA synthetases. The reaction takes place in the presence of glutamine and ATP through an activated phospho-Asp-tRNA(Asn) or phospho-Glu-tRNA(Gln). This Gluconobacter oxydans (strain 621H) (Gluconobacter suboxydans) protein is Aspartyl/glutamyl-tRNA(Asn/Gln) amidotransferase subunit B.